Reading from the N-terminus, the 435-residue chain is 5-hydroxybenzimidazole synthase (435 aa).

Residues Met-95, Tyr-124, His-163, 186 to 188 (SKG), 227 to 230 (NGLR), and Glu-266 each bind substrate. His-270 lines the Zn(2+) pocket. Tyr-293 lines the substrate pocket. His-334 lines the Zn(2+) pocket. 3 residues coordinate [4Fe-4S] cluster: Cys-410, Cys-413, and Cys-417.

It belongs to the ThiC family. 5-hydroxybenzimidazole synthase subfamily. Homodimer. It depends on [4Fe-4S] cluster as a cofactor.

The enzyme catalyses 5-amino-1-(5-phospho-beta-D-ribosyl)imidazole + AH2 + S-adenosyl-L-methionine = 5-hydroxybenzimidazole + 5'-deoxyadenosine + formate + L-methionine + A + NH4(+) + phosphate + 2 H(+). Its function is as follows. Catalyzes the conversion of aminoimidazole ribotide (AIR) to 5-hydroxybenzimidazole (5-HBI) in a radical S-adenosyl-L-methionine (SAM)-dependent reaction. Is thus involved in the anaerobic biosynthesis of the benzimidazole lower axial ligand of the cobamide produced by G.sulfurreducens. This chain is 5-hydroxybenzimidazole synthase, found in Geobacter sulfurreducens (strain ATCC 51573 / DSM 12127 / PCA).